We begin with the raw amino-acid sequence, 95 residues long: Aspartyl/glutamyl-tRNA(Asn/Gln) amidotransferase subunit C (95 aa).

It belongs to the GatC family. As to quaternary structure, heterotrimer of A, B and C subunits.

The catalysed reaction is L-glutamyl-tRNA(Gln) + L-glutamine + ATP + H2O = L-glutaminyl-tRNA(Gln) + L-glutamate + ADP + phosphate + H(+). The enzyme catalyses L-aspartyl-tRNA(Asn) + L-glutamine + ATP + H2O = L-asparaginyl-tRNA(Asn) + L-glutamate + ADP + phosphate + 2 H(+). Its function is as follows. Allows the formation of correctly charged Asn-tRNA(Asn) or Gln-tRNA(Gln) through the transamidation of misacylated Asp-tRNA(Asn) or Glu-tRNA(Gln) in organisms which lack either or both of asparaginyl-tRNA or glutaminyl-tRNA synthetases. The reaction takes place in the presence of glutamine and ATP through an activated phospho-Asp-tRNA(Asn) or phospho-Glu-tRNA(Gln). In Alkalilimnicola ehrlichii (strain ATCC BAA-1101 / DSM 17681 / MLHE-1), this protein is Aspartyl/glutamyl-tRNA(Asn/Gln) amidotransferase subunit C.